The primary structure comprises 199 residues: CASP-like protein 4B1 (199 aa).

A disordered region spans residues 1 to 32 (MAMVASPDDIVKSPLPPPPPPPPPPLPPAHKD). Over 1–53 (MAMVASPDDIVKSPLPPPPPPPPPPLPPAHKDKAAYNPYSGCPAHGGDDGLDG) the chain is Cytoplasmic. A compositionally biased stretch (pro residues) spans 14–28 (PLPPPPPPPPPPLPP). Residues 54–74 (IVLVLRAAAALLALVAMALVA) form a helical membrane-spanning segment. Residues 75 to 91 (SCRHGDWMEFTRYQEYR) lie on the Extracellular side of the membrane. A helical membrane pass occupies residues 92 to 112 (YLLGVAVVASLYSALQAARTF). Over 113–127 (RRMRAGTAYAATFLD) the chain is Cytoplasmic. A helical transmembrane segment spans residues 128–148 (FAGDQAVGYLLITASSAALPI). At 149-163 (TIRMRSAVVNTFTDV) the chain is on the extracellular side. A helical membrane pass occupies residues 164 to 184 (VAASISFAFLAFAALAFSALI). Topologically, residues 185 to 199 (AGFRLSSSSSSAYNY) are cytoplasmic.

The protein belongs to the Casparian strip membrane proteins (CASP) family. In terms of assembly, homodimer and heterodimers.

It localises to the cell membrane. This chain is CASP-like protein 4B1, found in Oryza sativa subsp. japonica (Rice).